A 694-amino-acid polypeptide reads, in one-letter code: Heat shock protein homolog SSE1 (694 aa).

The interval A671 to D694 is disordered. Basic and acidic residues predominate over residues A675–T684.

Belongs to the heat shock protein 70 family.

It localises to the cytoplasm. This Candida glabrata (strain ATCC 2001 / BCRC 20586 / JCM 3761 / NBRC 0622 / NRRL Y-65 / CBS 138) (Yeast) protein is Heat shock protein homolog SSE1 (SSE1).